The chain runs to 412 residues: Subtilisin-like protease 6 (412 aa).

The first 20 residues, 1–20, serve as a signal peptide directing secretion; the sequence is MGFITKAIPIVLAALSTVNG. A propeptide spanning residues 21–127 is cleaved from the precursor; that stretch reads ARILEAGPHA…VRATTNGTNL (107 aa). In terms of domain architecture, Inhibitor I9 spans 36–120; that stretch reads KYIVVMKKDV…FIEPDFVVRA (85 aa). The Peptidase S8 domain occupies 135–412; the sequence is SWGLARVSTR…SKLIYNGSGK (278 aa). Active-site charge relay system residues include Asp-167 and His-198. N-linked (GlcNAc...) asparagine glycosylation is found at Asn-252, Asn-264, and Asn-325. The active-site Charge relay system is Ser-358. Residue Asn-408 is glycosylated (N-linked (GlcNAc...) asparagine).

Belongs to the peptidase S8 family.

It localises to the secreted. Its function is as follows. Secreted subtilisin-like serine protease with keratinolytic activity that contributes to pathogenicity. The sequence is that of Subtilisin-like protease 6 (SUB6) from Trichophyton verrucosum (strain HKI 0517).